Here is a 292-residue protein sequence, read N- to C-terminus: MKKLTALTSAVLLGLAVSSSASAQDTIALAVSTLDNPFFVTLKDGAQKKADELGYKLVVLDSQNDPAKELANIEDLTVRGAKILLINPTASEAVGNAVAIANRKHIPVITLDRGAAKGNVVSHIASDNIAGGKMAGDFIAQKLGDNAKVIQLEGIAGTSAARERGEGFKQAIDAHKFNVLASQPADFDRTKGLNVTENLLASKGDVQAIFAQNDEMALGALRAVKAANKKVLIVGFDGTDDGVKAVKSGKMAATIAQQPELIGSLGVVTADKILKGEKVEAKIPVDLKVISE.

The N-terminal stretch at 1–23 (MKKLTALTSAVLLGLAVSSSASA) is a signal peptide.

This sequence belongs to the bacterial solute-binding protein 2 family. The complex is composed of an ATP-binding protein (RbsA), two transmembrane proteins (RbsC) and a solute-binding protein (RbsB).

It localises to the periplasm. Its function is as follows. Part of the ABC transporter complex RbsABC involved in ribose import. Binds ribose. The polypeptide is Ribose import binding protein RbsB (rbsB) (Haemophilus influenzae (strain ATCC 51907 / DSM 11121 / KW20 / Rd)).